The primary structure comprises 127 residues: MMRQSLQAVLPEISGNKTSSLRKSVCSDLLTLFNSPHSALPSLLVSGMPEWQLHNQSDKHLQSWYCRQLRSALLFHEPRIAALQVNLKEAYCHTLAISLEIMLYHDDEPLTFDLVWQKGSWHRTMPQ.

It belongs to the GpW/Gp25 family. IraD subfamily. Interacts with RssB.

It is found in the cytoplasm. Its function is as follows. Inhibits RpoS proteolysis by regulating RssB activity, thereby increasing the stability of the sigma stress factor RpoS during oxidative stress. Its effect on RpoS stability is due to its interaction with RssB, which probably blocks the interaction of RssB with RpoS, and the consequent delivery of the RssB-RpoS complex to the ClpXP protein degradation pathway. The protein is Anti-adapter protein IraD of Escherichia coli (strain SMS-3-5 / SECEC).